The sequence spans 472 residues: F-box protein At3g03040 (472 aa).

The F-box domain occupies 1–49 (MDLLSSLPDEVRCLILSFLTTKESASTSVLSKKWRNLFALVPNLDFDDS).

The chain is F-box protein At3g03040 from Arabidopsis thaliana (Mouse-ear cress).